A 294-amino-acid chain; its full sequence is Glyceraldehyde-3-phosphate dehydrogenase (294 aa).

NAD(+) is bound by residues Asp19, Lys63, and Thr105. Residues Ser134–Thr136, Thr165, Thr194–Gly195, and Arg217 contribute to the D-glyceraldehyde 3-phosphate site. Residue Cys135 is the Nucleophile of the active site.

The protein belongs to the glyceraldehyde-3-phosphate dehydrogenase family. In terms of assembly, homotetramer.

It localises to the cytoplasm. The catalysed reaction is D-glyceraldehyde 3-phosphate + phosphate + NAD(+) = (2R)-3-phospho-glyceroyl phosphate + NADH + H(+). It functions in the pathway carbohydrate degradation; glycolysis; pyruvate from D-glyceraldehyde 3-phosphate: step 1/5. Functionally, catalyzes the oxidative phosphorylation of glyceraldehyde 3-phosphate (G3P) to 1,3-bisphosphoglycerate (BPG) using the cofactor NAD. The first reaction step involves the formation of a hemiacetal intermediate between G3P and a cysteine residue, and this hemiacetal intermediate is then oxidized to a thioester, with concomitant reduction of NAD to NADH. The reduced NADH is then exchanged with the second NAD, and the thioester is attacked by a nucleophilic inorganic phosphate to produce BPG. This Atlantibacter hermannii (Escherichia hermannii) protein is Glyceraldehyde-3-phosphate dehydrogenase (gap).